The sequence spans 858 residues: Potassium transporter 7 (858 aa).

2 stretches are compositionally biased toward acidic residues: residues 1 to 16 and 38 to 53; these read MAEE…EEID and QDDD…DNDG. The disordered stretch occupies residues 1–68; it reads MAEESSMEGS…LESDEDEIPE (68 aa). Topologically, residues 1–104 are cytoplasmic; sequence MAEESSMEGS…DYEDLTVGRK (104 aa). The helical transmembrane segment at 105-125 threads the bilayer; that stretch reads VLLAFQTLGVVFGDVGTSPLY. Topologically, residues 126–147 are extracellular; that stretch reads TFSVMFSKSPVQEKEDVIGALS. A helical membrane pass occupies residues 148–168; that stretch reads LVLYTLLLVPLIKYVLVVLWA. At 169-232 the chain is on the cytoplasmic side; sequence NDDGEGGTFA…KLENSLILKK (64 aa). The helical transmembrane segment at 233–253 threads the bilayer; that stretch reads ILLVLVLAGTSMVIADGVVTP. Residues 254 to 269 lie on the Extracellular side of the membrane; that stretch reads AMSVMSAVGGLKVGVD. Residues 270-290 traverse the membrane as a helical segment; sequence VVEQDQVVMISVAFLVILFSL. The Cytoplasmic portion of the chain corresponds to 291 to 297; the sequence is QKYGTSK. The chain crosses the membrane as a helical span at residues 298 to 318; the sequence is MGLVVGPALLIWFCSLAGIGI. The Extracellular portion of the chain corresponds to 319-345; sequence YNLIKYDSSVYRAFNPVHIYYFFKRNS. Residues 346-366 form a helical membrane-spanning segment; that stretch reads INAWYALGGCILCATGSEALF. The Cytoplasmic portion of the chain corresponds to 367-380; the sequence is ADLCYFSVRSVQLT. A helical membrane pass occupies residues 381–401; it reads FVCLVLPCLMLGYMGQAAYLM. Residues 402-413 are Extracellular-facing; that stretch reads ENHADASQAFFS. The helical transmembrane segment at 414 to 434 threads the bilayer; sequence SVPGSAFWPVLFIANIAALIA. The Cytoplasmic segment spans residues 435-470; the sequence is SRTMTTATFSCIKQSTALGCFPRLKIIHTSRKFMGQ. A helical transmembrane segment spans residues 471-491; that stretch reads IYIPVLNWFLLAVCLVVVCSI. Over 492–496 the chain is Extracellular; it reads SSIDE. The chain crosses the membrane as a helical span at residues 497–517; sequence IGNAYGMAELGVMMTTTILVT. A topological domain (cytoplasmic) is located at residue L518. A helical membrane pass occupies residues 519–539; that stretch reads IMLLIWQINIVIVIAFLVVFL. Over 540-552 the chain is Extracellular; it reads GVELVFFSSVIAS. Residues 553–573 form a helical membrane-spanning segment; sequence VGDGSWIILVFAVIMFGIMYI. Residues 574–858 are Cytoplasmic-facing; sequence WNYGSKLRYE…LMQVGMTYMV (285 aa). The disordered stretch occupies residues 707-731; that stretch reads QERSLESDGNDDSDSEEDFPGSRVV. The span at 714 to 725 shows a compositional bias: acidic residues; sequence DGNDDSDSEEDF. Phosphoserine is present on residues S719 and S721.

It belongs to the HAK/KUP transporter (TC 2.A.72.3) family.

The protein resides in the cell membrane. In terms of biological role, probable potassium transporter. The protein is Potassium transporter 7 (POT7) of Arabidopsis thaliana (Mouse-ear cress).